The primary structure comprises 199 residues: 5'-deoxynucleotidase YfbR (199 aa).

Substrate is bound by residues 18–19 and His33; that span reads RW. An HD domain is found at 30 to 142; sequence VSEHSLQVAM…VKQADALCAY (113 aa). A divalent metal cation contacts are provided by His33, His68, and Asp69. Substrate is bound by residues Asp69, 77-80, and Asp137; that span reads DLPT. Asp137 contacts a divalent metal cation.

This sequence belongs to the 5DNU family. As to quaternary structure, homodimer. It depends on a divalent metal cation as a cofactor.

Its subcellular location is the cytoplasm. The catalysed reaction is a 2'-deoxyribonucleoside 5'-phosphate + H2O = a 2'-deoxyribonucleoside + phosphate. In terms of biological role, catalyzes the strictly specific dephosphorylation of 2'-deoxyribonucleoside 5'-monophosphates. In Escherichia coli (strain K12 / MC4100 / BW2952), this protein is 5'-deoxynucleotidase YfbR.